Reading from the N-terminus, the 336-residue chain is Phosphatidylglycerol--prolipoprotein diacylglyceryl transferase (336 aa).

A run of 3 helical transmembrane segments spans residues Ile-16–Val-36, Ile-53–Ile-73, and Ile-93–Ala-113. Arg-141 lines the a 1,2-diacyl-sn-glycero-3-phospho-(1'-sn-glycerol) pocket. 3 helical membrane passes run Pro-190–Gly-210, Gly-220–Leu-240, and Ile-253–Gln-273.

Belongs to the Lgt family.

The protein localises to the cell membrane. The catalysed reaction is L-cysteinyl-[prolipoprotein] + a 1,2-diacyl-sn-glycero-3-phospho-(1'-sn-glycerol) = an S-1,2-diacyl-sn-glyceryl-L-cysteinyl-[prolipoprotein] + sn-glycerol 1-phosphate + H(+). It participates in protein modification; lipoprotein biosynthesis (diacylglyceryl transfer). Catalyzes the transfer of the diacylglyceryl group from phosphatidylglycerol to the sulfhydryl group of the N-terminal cysteine of a prolipoprotein, the first step in the formation of mature lipoproteins. This Bifidobacterium adolescentis (strain ATCC 15703 / DSM 20083 / NCTC 11814 / E194a) protein is Phosphatidylglycerol--prolipoprotein diacylglyceryl transferase.